Here is a 122-residue protein sequence, read N- to C-terminus: Large ribosomal subunit protein uL14 (122 aa).

Belongs to the universal ribosomal protein uL14 family. Part of the 50S ribosomal subunit. Forms a cluster with proteins L3 and L19. In the 70S ribosome, L14 and L19 interact and together make contacts with the 16S rRNA in bridges B5 and B8.

Its function is as follows. Binds to 23S rRNA. Forms part of two intersubunit bridges in the 70S ribosome. The chain is Large ribosomal subunit protein uL14 from Buchnera aphidicola subsp. Schizaphis graminum (strain Sg).